An 883-amino-acid polypeptide reads, in one-letter code: Lethal(3)malignant brain tumor-like protein 3 (883 aa).

An interaction with RBPJ. Required for transcription repressor activity on Notch target genes region spans residues 1–64; that stretch reads MTESASSTSG…VKKATATTTW (64 aa). Over residues 146-156 the composition is skewed to basic and acidic residues; sequence HAKDKDQKDER. Residues 146 to 223 are disordered; sequence HAKDKDQKDE…RGDSAVLKQG (78 aa). Composition is skewed to acidic residues over residues 157–166 and 185–194; these read DGGEDNDEED and DDGEERDDEM. MBT repeat units follow at residues 232 to 332, 340 to 439, and 448 to 543; these read WCWA…LRPP, FNWQ…LITP, and FSWD…LQAP. The CCHHC-type; degenerate zinc-finger motif lies at 549-593; it reads LMEPSETGGCPTLGCRGVGHFKKSRYLGTQSGANCPYSEINLSKE. Residues 595–768 are disordered; it reads IFPDRLSGDT…TQQQAQTQQQ (174 aa). The segment covering 616-662 has biased composition (basic and acidic residues); it reads KRMDTRESSSSPETREKHANNFKEDSEKKKENEVKTSAEAKVVREEP. K638 participates in a covalent cross-link: Glycyl lysine isopeptide (Lys-Gly) (interchain with G-Cter in SUMO2). Low complexity-rich tracts occupy residues 663-742 and 749-768; these read TPSV…QQPQ and QPQQ…TQQQ. One can recognise an SAM domain in the interval 811–875; it reads WSTDEVSEFI…FNSILMFKAA (65 aa).

Interacts with RNF2. Interacts (via SAM domain) with SAMD1 (via SAM domain); the interaction mediates L3MBTL3 binding to chromatin. Interacts with RBPJ; the interaction is required for L3MBTL3 localization to chromatin and is impaired the Notch-derived peptides containing the intracellular domain (NICD). Interacts (via SAM domain) with KDM1A. Interacts with DCAF5. Interacts with DNMT1. Interacts with E2F1. Interacts with SOX2. Interacts with SFMBT1. As to expression, detected in hematopoietic progenitor cells in fetal liver. Detected in adult bone marrow, heart, brain, spleen, lung, liver, kidney and testis.

The protein localises to the nucleus. In terms of biological role, is a negative regulator of Notch target genes expression, required for RBPJ-mediated transcriptional repression. It recruits KDM1A to Notch-responsive elements and promotes KDM1A-mediated H3K4me demethylation. Involved in the regulation of ubiquitin-dependent degradation of a set of methylated non-histone proteins, including SOX2. It acts as an adapter recruiting the CRL4-DCAF5 E3 ubiquitin ligase complex to methylated target proteins. Also involved in the regulation of ubiquitin-dependent degradation of methylated DNMT1 and E2F1. Required for normal maturation of myeloid progenitor cells. The sequence is that of Lethal(3)malignant brain tumor-like protein 3 from Mus musculus (Mouse).